An 800-amino-acid chain; its full sequence is DNA topoisomerase 4 subunit A (800 aa).

The 465-residue stretch at 31–495 (LPDVRDGLKP…EIEEIKIDKE (465 aa)) folds into the Topo IIA-type catalytic domain. Y119 serves as the catalytic O-(5'-phospho-DNA)-tyrosine intermediate.

It belongs to the type II topoisomerase GyrA/ParC subunit family. ParC type 2 subfamily. Heterotetramer composed of ParC and ParE.

The protein localises to the cell membrane. It catalyses the reaction ATP-dependent breakage, passage and rejoining of double-stranded DNA.. Topoisomerase IV is essential for chromosome segregation. It relaxes supercoiled DNA. Performs the decatenation events required during the replication of a circular DNA molecule. The polypeptide is DNA topoisomerase 4 subunit A (Staphylococcus aureus (strain NCTC 8325 / PS 47)).